A 96-amino-acid chain; its full sequence is Nucleoid-associated protein CCA_00330 (96 aa).

Belongs to the YbaB/EbfC family. As to quaternary structure, homodimer.

It localises to the cytoplasm. It is found in the nucleoid. Functionally, binds to DNA and alters its conformation. May be involved in regulation of gene expression, nucleoid organization and DNA protection. In Chlamydia caviae (strain ATCC VR-813 / DSM 19441 / 03DC25 / GPIC) (Chlamydophila caviae), this protein is Nucleoid-associated protein CCA_00330.